Reading from the N-terminus, the 371-residue chain is Cytochrome b (371 aa).

4 helical membrane passes run 25 to 45 (FGSM…FLAI), 69 to 90 (WIMQ…YIHI), 105 to 125 (WLSG…GYVL), and 170 to 190 (FCAL…IHII). Residues His75 and His89 each contribute to the heme b site. Residues His174 and His188 each coordinate heme b. Position 193 (His193) interacts with a ubiquinone. A run of 4 helical transmembrane segments spans residues 218 to 238 (YKDF…LSVS), 280 to 300 (LGGT…PFTH), 312 to 332 (LSQT…WTAT), and 339 to 358 (FITI…IMNP).

This sequence belongs to the cytochrome b family. As to quaternary structure, the cytochrome bc1 complex contains 3 respiratory subunits (MT-CYB, CYC1 and UQCRFS1), 2 core proteins (UQCRC1 and UQCRC2) and probably 6 low-molecular weight proteins. It depends on heme b as a cofactor.

The protein localises to the mitochondrion inner membrane. Component of the ubiquinol-cytochrome c reductase complex (complex III or cytochrome b-c1 complex) that is part of the mitochondrial respiratory chain. The b-c1 complex mediates electron transfer from ubiquinol to cytochrome c. Contributes to the generation of a proton gradient across the mitochondrial membrane that is then used for ATP synthesis. The chain is Cytochrome b (MT-CYB) from Micrurus tener microgalbineus (Spotted coral snake).